The chain runs to 301 residues: GTPase Era (301 aa).

One can recognise an Era-type G domain in the interval 4 to 173; the sequence is KAGFVALIGK…LECISKHLNP (170 aa). The G1 stretch occupies residues 12–19; that stretch reads GKPNAGKS. 12-19 contacts GTP; that stretch reads GKPNAGKS. The tract at residues 38–42 is G2; that stretch reads NATRK. The tract at residues 64 to 67 is G3; sequence DTPG. GTP contacts are provided by residues 64 to 68 and 122 to 125; these read DTPGL and SKID. The tract at residues 122 to 125 is G4; sequence SKID. The G5 stretch occupies residues 152-154; that stretch reads LSA. A KH type-2 domain is found at 204 to 280; it reads LSDEIPYESD…FLNLQVIAQK (77 aa).

This sequence belongs to the TRAFAC class TrmE-Era-EngA-EngB-Septin-like GTPase superfamily. Era GTPase family. Monomer.

The protein resides in the cytoplasm. The protein localises to the cell inner membrane. An essential GTPase that binds both GDP and GTP, with rapid nucleotide exchange. Plays a role in 16S rRNA processing and 30S ribosomal subunit biogenesis and possibly also in cell cycle regulation and energy metabolism. The protein is GTPase Era of Helicobacter pylori (strain P12).